The chain runs to 327 residues: GTPase Obg (327 aa).

In terms of domain architecture, Obg spans 1–159; it reads MKFLDQVKIY…YVIWLQLKTI (159 aa). The region spanning 160–327 is the OBG-type G domain; that stretch reads ADVGIVGLPN…IKAKLLSYVS (168 aa). Residues 166-173, 191-195, 212-215, 279-282, and 308-310 contribute to the GTP site; these read GLPNAGKS, FTTLN, DIPG, NKTD, and STL. 2 residues coordinate Mg(2+): Ser173 and Thr193.

Belongs to the TRAFAC class OBG-HflX-like GTPase superfamily. OBG GTPase family. In terms of assembly, monomer. Requires Mg(2+) as cofactor.

The protein resides in the cytoplasm. Its function is as follows. An essential GTPase which binds GTP, GDP and possibly (p)ppGpp with moderate affinity, with high nucleotide exchange rates and a fairly low GTP hydrolysis rate. Plays a role in control of the cell cycle, stress response, ribosome biogenesis and in those bacteria that undergo differentiation, in morphogenesis control. In Pelagibacter ubique (strain HTCC1062), this protein is GTPase Obg.